Here is a 427-residue protein sequence, read N- to C-terminus: MSAIIDVIAREILDSRGNPTVEADVLLESGVIGRAAVPSGASTGSREAIELRDGDKSRYLGKGVLKAVEHVNTEICEAIIGLDVEDQAFIDQTMIELDGTENKSRLGANALLAVSMACARAAAEQAGLPLYRYLGGAAPMQLPVPMMNIINGGAHANNNIDMQEFMVIPVGAPSFREALRYGAEVFHALKKLLDDAGMTTTVGDEGGFAPNLESHEAALKLIVQAIEKAGLQPGIDVAIGVDCASSEFYKDGLYHIDSENLKLTSAAFTDYLAAWCDKYPIISIEDGMAEGDWDGWKILTDRLGRRVQLVGDDLFVTNAKILKEGIEKDIANSILIKVNQIGTLSETFQAIEMAKQAGYTSVISHRSGETEDTTIADLAVATNARQIKTGSLSRSDRMAKYNQLLRIEEELGDTASYPGRDAFRQRG.

Glutamine 163 provides a ligand contact to (2R)-2-phosphoglycerate. Glutamate 205 functions as the Proton donor in the catalytic mechanism. Mg(2+) contacts are provided by aspartate 242, glutamate 285, and aspartate 312. (2R)-2-phosphoglycerate contacts are provided by lysine 337, arginine 366, serine 367, and lysine 388. The active-site Proton acceptor is lysine 337.

Belongs to the enolase family. Mg(2+) is required as a cofactor.

The protein resides in the cytoplasm. It localises to the secreted. Its subcellular location is the cell surface. The catalysed reaction is (2R)-2-phosphoglycerate = phosphoenolpyruvate + H2O. It participates in carbohydrate degradation; glycolysis; pyruvate from D-glyceraldehyde 3-phosphate: step 4/5. Catalyzes the reversible conversion of 2-phosphoglycerate (2-PG) into phosphoenolpyruvate (PEP). It is essential for the degradation of carbohydrates via glycolysis. The polypeptide is Enolase (Thiobacillus denitrificans (strain ATCC 25259 / T1)).